The following is a 254-amino-acid chain: VVTITLNLANPSKGQYSSFVDRIRNNVRDPKLKYGGTDIAVIGAPPTREKYLRINLQGPRGTVSLGLRRENLYVVAYLAMDNTNTNKAYYFRNQITSAELRTVFPEATAANQIVIQYGEDYQSIERNAQITQGSQSRKELGLGIDLLVTSIDGVNRKARVVRNEARFLLIAIQMTAEAARFRYIQNLVTFNFPKKFDSDNKVIQFEVSWGKISRAIYGDCKNGVFNKDYDFGFGKVRQAKQLQMGLLMYLGRPG.

The protein belongs to the ribosome-inactivating protein family. Type 1 RIP subfamily. Expressed in seeds; most abundant in the perisperm.

It catalyses the reaction Endohydrolysis of the N-glycosidic bond at one specific adenosine on the 28S rRNA.. Its function is as follows. Exhibits N-glycosylase activity. Catalyzes the release of one adenine from a ribosome. Acts as a ribosome-inactivating protein and inhibits protein synthesis in a rabbit-reticulocyte lysate system and in various cell lines (in vitro). Induces cell death in Huh-7 liver cells. May contribute to the protection against plant pests and predators or play a role in regulating the death of plant cells. This Gypsophila vaccaria (Cow soapwort) protein is rRNA N-glycosylase sapovaccarin-S1.